The primary structure comprises 122 residues: Large ribosomal subunit protein uL14 (122 aa).

Belongs to the universal ribosomal protein uL14 family. Part of the 50S ribosomal subunit. Forms a cluster with proteins L3 and L19. In the 70S ribosome, L14 and L19 interact and together make contacts with the 16S rRNA in bridges B5 and B8.

Its function is as follows. Binds to 23S rRNA. Forms part of two intersubunit bridges in the 70S ribosome. In Lawsonia intracellularis (strain PHE/MN1-00), this protein is Large ribosomal subunit protein uL14.